Reading from the N-terminus, the 204-residue chain is Guanylate kinase (204 aa).

In terms of domain architecture, Guanylate kinase-like spans 4–182; that stretch reads GLLYVISAPS…ALNQLRAIVQ (179 aa). Residue 11–18 participates in ATP binding; sequence APSGAGKT.

The protein belongs to the guanylate kinase family.

The protein localises to the cytoplasm. The enzyme catalyses GMP + ATP = GDP + ADP. Its function is as follows. Essential for recycling GMP and indirectly, cGMP. This Methylococcus capsulatus (strain ATCC 33009 / NCIMB 11132 / Bath) protein is Guanylate kinase.